The chain runs to 707 residues: Drebrin (707 aa).

At A2 the chain carries N-acetylalanine. The 132-residue stretch at 3–134 folds into the ADF-H domain; sequence GVSFSGHRLE…DAGAIGQRLS (132 aa). Phosphoserine is present on residues S141 and S142. A compositionally biased stretch (basic and acidic residues) spans 209 to 236; the sequence is ERMEQERQEQEERERRYREREQQIEEHR. Disordered stretches follow at residues 209 to 438, 452 to 497, 531 to 557, 582 to 609, and 630 to 707; these read ERME…VCKE, AEEP…TSVA, WPGNGEEASTPQAEPRVPTPPSGAEAS, LLNFDELPEPPATFCDPEEEAEGEPLAA, and LEPE…EGGD. At S241 the chain carries Phosphoserine. Residues 288 to 298 are compositionally biased toward basic and acidic residues; it reads DNPREFFRQQE. Low complexity predominate over residues 329–343; it reads SDSGPSSSSSSSSSP. S342 bears the Phosphoserine mark. The segment covering 355-364 has biased composition (polar residues); that stretch reads RTPNLSSSLP. A phosphothreonine mark is found at T377 and T381. Residues 380–395 show a composition bias toward polar residues; sequence PTRSPSDSSTASTPIT. Phosphoserine occurs at positions 383, 385, and 391. Position 392 is a phosphothreonine (T392). Residues 409–420 show a composition bias toward pro residues; the sequence is QPPPPPPPPPPA. Basic and acidic residues predominate over residues 428 to 438; sequence PRLDGEEVCKE. Phosphoserine is present on S467. A Phosphothreonine modification is found at T549. The span at 639–652 shows a compositional bias: polar residues; that stretch reads NGETTQKEGTQQAS. Residue S659 is modified to Phosphoserine. Residues 695–707 are compositionally biased toward acidic residues; the sequence is PVPEEEEGFEGGD.

As to quaternary structure, interacts with RUFY. Interacts with CXCR4; this interaction is enhanced by antigenic stimulation. Interacts (via ADF-H domain) with ZMYND8 (via N-terminus); the interaction leads to sequestering of ZMYND8 in the cytoplasm. ISGylated. As to expression, brain neurons.

It is found in the cytoplasm. The protein resides in the cell projection. It localises to the dendrite. The protein localises to the cell cortex. Its subcellular location is the cell junction. It is found in the growth cone. Actin cytoskeleton-organizing protein that plays a role in the formation of cell projections. Required for actin polymerization at immunological synapses (IS) and for the recruitment of the chemokine receptor CXCR4 to IS. Plays a role in dendritic spine morphogenesis and organization, including the localization of the dopamine receptor DRD1 to the dendritic spines. Involved in memory-related synaptic plasticity in the hippocampus. The polypeptide is Drebrin (Dbn1) (Rattus norvegicus (Rat)).